A 169-amino-acid polypeptide reads, in one-letter code: Disulfide bond formation protein B (169 aa).

The Cytoplasmic segment spans residues 1–14 (MSNDTFYLKREKRF). Residues 15–31 (LVLLGIICLSLIGGALY) form a helical membrane-spanning segment. At 32–49 (MQIALGEAPCPLCILQRY) the chain is on the periplasmic side. A disulfide bridge links Cys41 with Cys44. The chain crosses the membrane as a helical span at residues 50–64 (ALLFIAIFAFIGAAM). The Cytoplasmic segment spans residues 65 to 71 (NGRRGVT). Residues 72-89 (VFEALVTLSALCGIAAAG) traverse the membrane as a helical segment. At 90–144 (RHAWILAHPSDSCGIDILQPIVDGLPLATLFPTGFQVSGFCTTPYPPVLGLSLAQ) the chain is on the periplasmic side. Residues Cys102 and Cys130 are joined by a disulfide bond. A helical membrane pass occupies residues 145–163 (WALTAFVLTAILVPACIIR). Residues 164–169 (NRRKPY) are Cytoplasmic-facing.

The protein belongs to the DsbB family.

It is found in the cell inner membrane. Functionally, required for disulfide bond formation in some periplasmic proteins. Acts by oxidizing the DsbA protein. The polypeptide is Disulfide bond formation protein B (Pseudomonas syringae pv. tomato (strain ATCC BAA-871 / DC3000)).